Here is a 251-residue protein sequence, read N- to C-terminus: Adenosine 5'-phosphosulfate reductase (251 aa).

Residues cysteine 121, cysteine 122, cysteine 204, and cysteine 207 each coordinate [4Fe-4S] cluster. The active-site Nucleophile; cysteine thiosulfonate intermediate is cysteine 232.

This sequence belongs to the PAPS reductase family. CysH subfamily. [4Fe-4S] cluster serves as cofactor.

The protein resides in the cytoplasm. The enzyme catalyses [thioredoxin]-disulfide + sulfite + AMP + 2 H(+) = adenosine 5'-phosphosulfate + [thioredoxin]-dithiol. Its pathway is sulfur metabolism; hydrogen sulfide biosynthesis; sulfite from sulfate. Functionally, catalyzes the formation of sulfite from adenosine 5'-phosphosulfate (APS) using thioredoxin as an electron donor. The polypeptide is Adenosine 5'-phosphosulfate reductase (Sinorhizobium fredii (strain NBRC 101917 / NGR234)).